The following is a 283-amino-acid chain: Bifunctional protein FolD (283 aa).

NADP(+) is bound by residues 165-167 (GRS), serine 190, and threonine 231.

It belongs to the tetrahydrofolate dehydrogenase/cyclohydrolase family. In terms of assembly, homodimer.

It carries out the reaction (6R)-5,10-methylene-5,6,7,8-tetrahydrofolate + NADP(+) = (6R)-5,10-methenyltetrahydrofolate + NADPH. The catalysed reaction is (6R)-5,10-methenyltetrahydrofolate + H2O = (6R)-10-formyltetrahydrofolate + H(+). It functions in the pathway one-carbon metabolism; tetrahydrofolate interconversion. Catalyzes the oxidation of 5,10-methylenetetrahydrofolate to 5,10-methenyltetrahydrofolate and then the hydrolysis of 5,10-methenyltetrahydrofolate to 10-formyltetrahydrofolate. The sequence is that of Bifunctional protein FolD from Nocardia farcinica (strain IFM 10152).